The primary structure comprises 260 residues: Flap endonuclease Xni (260 aa).

A Mg(2+)-binding site is contributed by Asp-109. One can recognise a 5'-3' exonuclease domain in the interval 165 to 259 (VKPSQLADYW…DIRFTGPNKA (95 aa)). Residues Leu-176, Pro-185, Val-187, and Val-190 each coordinate K(+). Positions 189 to 194 (GVGPKA) are interaction with DNA.

It belongs to the Xni family. The cofactor is Mg(2+). Requires K(+) as cofactor.

In terms of biological role, has flap endonuclease activity. During DNA replication, flap endonucleases cleave the 5'-overhanging flap structure that is generated by displacement synthesis when DNA polymerase encounters the 5'-end of a downstream Okazaki fragment. This Vibrio campbellii (strain ATCC BAA-1116) protein is Flap endonuclease Xni.